A 312-amino-acid polypeptide reads, in one-letter code: Small kinetochore-associated protein (312 aa).

Positions 1–13 (MATHKAEAQETDF) are enriched in basic and acidic residues. 3 disordered regions span residues 1-32 (MATH…PSSR), 55-176 (LKRS…KDKN), and 221-242 (KGLN…DPTD). The segment covering 75 to 84 (RPTTMASSKT) has biased composition (polar residues). Basic and acidic residues-rich tracts occupy residues 131 to 143 (DVTK…RENG) and 166 to 176 (QKPEEDLKDKN). Residues 156 to 312 (IRSSYKPLSK…LEEMEQLLEM (157 aa)) are interaction with SPAG5. A coiled-coil region spans residues 169–210 (EEDLKDKNELLEAVNKQLHQKLTETQGELKDLTQKVELLEKF). Residues 246-288 (LLETLKDELKLFNETAKKQMEELQALKVKLKLKEKERIQFLEQ) adopt a coiled-coil conformation.

As to quaternary structure, part of an astrin (SPAG5)-kinastrin (SKAP) complex containing KNSTRN, SPAG5, PLK1, DYNLL1 and SGO2. Interacts with SPAG5. Directly binds to microtubules, although at relatively low affinity. Interacts with CENPE; this interaction greatly favors microtubule-binding. Interacts with DSN1/MIS13; leading to localization to kinetochores. Interacts with MAPRE1/EB1; leading to localization to the microtubule plus ends. Interacts with PRPF19. Interacts with DYNLL1. Interacts with MAP4.

Its subcellular location is the nucleus. The protein resides in the chromosome. The protein localises to the centromere. It is found in the kinetochore. It localises to the cytoplasm. Its subcellular location is the cytoskeleton. The protein resides in the spindle pole. The protein localises to the microtubule organizing center. In terms of biological role, essential component of the mitotic spindle required for faithful chromosome segregation and progression into anaphase. Promotes the metaphase-to-anaphase transition and is required for chromosome alignment, normal timing of sister chromatid segregation, and maintenance of spindle pole architecture. The astrin (SPAG5)-kinastrin (SKAP) complex promotes stable microtubule-kinetochore attachments. Required for kinetochore oscillations and dynamics of microtubule plus-ends during live cell mitosis, possibly by forming a link between spindle microtubule plus-ends and mitotic chromosomes to achieve faithful cell division. This chain is Small kinetochore-associated protein (Knstrn), found in Rattus norvegicus (Rat).